The chain runs to 241 residues: Pyridoxine 5'-phosphate synthase (241 aa).

N7 is a binding site for 3-amino-2-oxopropyl phosphate. 9-10 provides a ligand contact to 1-deoxy-D-xylulose 5-phosphate; that stretch reads DH. R18 is a binding site for 3-amino-2-oxopropyl phosphate. Catalysis depends on H43, which acts as the Proton acceptor. Residues R45 and H50 each coordinate 1-deoxy-D-xylulose 5-phosphate. The Proton acceptor role is filled by E70. T100 serves as a coordination point for 1-deoxy-D-xylulose 5-phosphate. Catalysis depends on H190, which acts as the Proton donor. 3-amino-2-oxopropyl phosphate contacts are provided by residues G191 and 212–213; that span reads GH.

The protein belongs to the PNP synthase family. As to quaternary structure, homooctamer; tetramer of dimers.

It localises to the cytoplasm. It carries out the reaction 3-amino-2-oxopropyl phosphate + 1-deoxy-D-xylulose 5-phosphate = pyridoxine 5'-phosphate + phosphate + 2 H2O + H(+). The protein operates within cofactor biosynthesis; pyridoxine 5'-phosphate biosynthesis; pyridoxine 5'-phosphate from D-erythrose 4-phosphate: step 5/5. Its function is as follows. Catalyzes the complicated ring closure reaction between the two acyclic compounds 1-deoxy-D-xylulose-5-phosphate (DXP) and 3-amino-2-oxopropyl phosphate (1-amino-acetone-3-phosphate or AAP) to form pyridoxine 5'-phosphate (PNP) and inorganic phosphate. In Bordetella avium (strain 197N), this protein is Pyridoxine 5'-phosphate synthase.